The primary structure comprises 965 residues: Phosphoenolpyruvate carboxylase (965 aa).

Phosphoserine is present on Ser11. Active-site residues include His173 and Lys601.

Belongs to the PEPCase type 1 family. As to quaternary structure, homotetramer. The cofactor is Mg(2+).

It is found in the cytoplasm. The enzyme catalyses oxaloacetate + phosphate = phosphoenolpyruvate + hydrogencarbonate. It functions in the pathway photosynthesis; C3 acid pathway. With respect to regulation, by light-reversible phosphorylation. Through the carboxylation of phosphoenolpyruvate (PEP) it forms oxaloacetate, a four-carbon dicarboxylic acid source for the tricarboxylic acid cycle. The polypeptide is Phosphoenolpyruvate carboxylase (PPC1) (Solanum tuberosum (Potato)).